A 145-amino-acid chain; its full sequence is ATP synthase epsilon chain (145 aa).

The protein belongs to the ATPase epsilon chain family. In terms of assembly, F-type ATPases have 2 components, CF(1) - the catalytic core - and CF(0) - the membrane proton channel. CF(1) has five subunits: alpha(3), beta(3), gamma(1), delta(1), epsilon(1). CF(0) has three main subunits: a, b and c.

The protein resides in the cell inner membrane. Functionally, produces ATP from ADP in the presence of a proton gradient across the membrane. The sequence is that of ATP synthase epsilon chain from Francisella tularensis subsp. holarctica (strain FTNF002-00 / FTA).